Reading from the N-terminus, the 109-residue chain is Flagellar hook-basal body complex protein FliE (109 aa).

Belongs to the FliE family.

Its subcellular location is the bacterial flagellum basal body. The sequence is that of Flagellar hook-basal body complex protein FliE from Nitrosomonas eutropha (strain DSM 101675 / C91 / Nm57).